The chain runs to 623 residues: Replication protein A 70 kDa DNA-binding subunit (623 aa).

M1 carries the N-acetylmethionine modification. Residues K22 and K88 each participate in a glycyl lysine isopeptide (Lys-Gly) (interchain with G-Cter in ubiquitin) cross-link. The disordered stretch occupies residues 116 to 163; sequence VPYNEGYGQQQQQQQQQQQQAVPSPASAATPPASKPQPQNGSLGMGST. Positions 124–154 are enriched in low complexity; it reads QQQQQQQQQQQQAVPSPASAATPPASKPQPQ. N6-acetyllysine; alternate is present on residues K172 and K176. Glycyl lysine isopeptide (Lys-Gly) (interchain with G-Cter in ubiquitin); alternate cross-links involve residues K172 and K176. T189 carries the post-translational modification Phosphothreonine. Residue K192 forms a Glycyl lysine isopeptide (Lys-Gly) (interchain with G-Cter in ubiquitin) linkage. Residue T200 is modified to Phosphothreonine. A DNA-binding region (OB) is located at residues 206-290; that stretch reads WTICARVTNK…VKNDYEMTFN (85 aa). Residues K229 and K253 each participate in a glycyl lysine isopeptide (Lys-Gly) (interchain with G-Cter in ubiquitin) cross-link. Residue K268 is modified to N6-acetyllysine; alternate. Residue K268 forms a Glycyl lysine isopeptide (Lys-Gly) (interchain with G-Cter in ubiquitin); alternate linkage. Residues K276 and K340 each participate in a glycyl lysine isopeptide (Lys-Gly) (interchain with G-Cter in ubiquitin) cross-link. S393 bears the Phosphoserine mark. K419 is covalently cross-linked (Glycyl lysine isopeptide (Lys-Gly) (interchain with G-Cter in ubiquitin)). K458 is covalently cross-linked (Glycyl lysine isopeptide (Lys-Gly) (interchain with G-Cter in SUMO)). Residue K467 forms a Glycyl lysine isopeptide (Lys-Gly) (interchain with G-Cter in ubiquitin) linkage. The C4-type zinc finger occupies 490–512; the sequence is CPTQDCNKKVIDQQNGLYRCEKC. Residue K562 forms a Glycyl lysine isopeptide (Lys-Gly) (interchain with G-Cter in ubiquitin) linkage. K586 is covalently cross-linked (Glycyl lysine isopeptide (Lys-Gly) (interchain with G-Cter in SUMO)).

This sequence belongs to the replication factor A protein 1 family. Component of the canonical replication protein A complex (RPA), a heterotrimer composed of RPA1, RPA2 and RPA3. The DNA-binding activity may reside exclusively on the RPA1 subunit. Interacts with PRPF19; the PRP19-CDC5L complex is recruited to the sites of DNA repair where it ubiquitinates the replication protein A complex (RPA). Interacts with RIPK1. Interacts with the polymerase alpha subunit POLA1/p180; this interaction stabilizes the replicative complex and reduces the misincorporation rate of DNA polymerase alpha by acting as a fidelity clamp. Interacts with RAD51 and SENP6 to regulate DNA repair. Interacts with HELB; this interaction promotes HELB recruitment to chromatin following DNA damage. Interacts with PRIMPOL; leading to recruit PRIMPOL on chromatin and stimulate its DNA primase activity. Interacts with XPA; the interaction is direct and associates XPA with the RPA complex. Interacts with ETAA1; the interaction is direct and promotes ETAA1 recruitment at stalled replication forks. Interacts with RPA1; this interaction associates HROB with the RPA complex. Interacts (when poly-ADP-ribosylated) with HTATSF1. In terms of processing, DNA damage-induced 'Lys-63'-linked polyubiquitination by PRPF19 mediates ATRIP recruitment to the RPA complex at sites of DNA damage and activation of ATR. Ubiquitinated by RFWD3 at stalled replication forks in response to DNA damage: ubiquitination by RFWD3 does not lead to degradation by the proteasome and promotes removal of the RPA complex from stalled replication forks, promoting homologous recombination. Sumoylated on lysine residues Lys-458 and Lys-586, with Lys-458 being the major site. Sumoylation promotes recruitment of RAD51 to the DNA damage foci to initiate DNA repair through homologous recombination. Desumoylated by SENP6. Post-translationally, poly-ADP-ribosylated by PARP1; promoting recruitment of HTATSF1.

It localises to the nucleus. Its subcellular location is the PML body. In terms of biological role, as part of the heterotrimeric replication protein A complex (RPA/RP-A), binds and stabilizes single-stranded DNA intermediates, that form during DNA replication or upon DNA stress. It prevents their reannealing and in parallel, recruits and activates different proteins and complexes involved in DNA metabolism. Thereby, it plays an essential role both in DNA replication and the cellular response to DNA damage. In the cellular response to DNA damage, the RPA complex controls DNA repair and DNA damage checkpoint activation. Through recruitment of ATRIP activates the ATR kinase a master regulator of the DNA damage response. It is required for the recruitment of the DNA double-strand break repair factors RAD51 and RAD52 to chromatin in response to DNA damage. Also recruits to sites of DNA damage proteins like XPA and XPG that are involved in nucleotide excision repair and is required for this mechanism of DNA repair. Also plays a role in base excision repair (BER) probably through interaction with UNG. Also recruits SMARCAL1/HARP, which is involved in replication fork restart, to sites of DNA damage. May also play a role in telomere maintenance. In Mus musculus (Mouse), this protein is Replication protein A 70 kDa DNA-binding subunit (Rpa1).